A 149-amino-acid chain; its full sequence is Calmodulin (149 aa).

Position 2 is an N-acetylalanine (Ala-2). EF-hand domains lie at 8 to 43 (EQIAEFKEAFSLFDKDGDGTITTKELGTVMRSLGQN), 44 to 79 (PTEAELQDMINEVDADGNGTIDFPEFLTMMAKKMKD), 81 to 116 (DSEEEIREAFRVFDKDGNGYISAAELRHVMTNLGEK), and 117 to 149 (LTDEEVDEMIREADIDGDGQVNYEEFVQMMTAK). Residues Asp-21, Asp-23, Asp-25, Thr-27, Glu-32, Asp-57, Asp-59, Asn-61, Thr-63, Glu-68, Asp-94, Asp-96, Asn-98, Tyr-100, and Glu-105 each contribute to the Ca(2+) site. Residue Lys-116 is modified to N6,N6,N6-trimethyllysine. Positions 130, 132, 134, 136, and 141 each coordinate Ca(2+).

Belongs to the calmodulin family.

In terms of biological role, calmodulin acts as part of a calcium signal transduction pathway by mediating the control of a large number of enzymes, ion channels, aquaporins and other proteins through calcium-binding. Calcium-binding is required for the activation of calmodulin. Among the enzymes to be stimulated by the calmodulin-calcium complex are a number of protein kinases, such as myosin light-chain kinases and calmodulin-dependent protein kinase type II (CaMK2), and phosphatases. This Electrophorus electricus (Electric eel) protein is Calmodulin (calm).